The sequence spans 2207 residues: Genome polyprotein (2207 aa).

A lipid anchor (N-myristoyl glycine; by host) is attached at Gly-2. Topologically, residues 2–1518 (GAQVSSQKVG…NINRAMTILQ (1517 aa)) are cytoplasmic. Residues 579 to 599 (GLGDLIEGVVEGVTRNALTPL) are amphipathic alpha-helix. Residues 597–613 (TPLTPANNLPDTQSSGP) show a composition bias toward polar residues. Disordered stretches follow at residues 597-620 (TPLT…KETP) and 628-647 (GATN…VIQK). Catalysis depends on for protease 2A activity residues His-899 and Asp-917. 2 residues coordinate Zn(2+): Cys-934 and Cys-936. Cys-988 functions as the For protease 2A activity in the catalytic mechanism. Zn(2+) contacts are provided by Cys-994 and His-996. Positions 1126 to 1198 (GDSWLKKFTE…HQSCPSQEHQ (73 aa)) are membrane-binding. An oligomerization region spans residues 1126–1264 (GDSWLKKFTE…SPGTGKSVAT (139 aa)). The RNA-binding stretch occupies residues 1147-1151 (SNKIS). Residues 1230–1386 (EHTINNYVQF…SEYSRDGKLN (157 aa)) enclose the SF3 helicase domain. Residue 1254-1261 (GSPGTGKS) coordinates ATP. Residues Cys-1394, Cys-1397, Cys-1406, and Cys-1411 each contribute to the Zn(2+) site. The segment at 1394–1411 (CKNCHHPANFKRCCPLVC) adopts a C4-type zinc-finger fold. The segment at 1438-1445 (ERNRRSSI) is RNA-binding. Positions 1449 to 1454 (MEALFQ) are oligomerization. Residues 1519 to 1534 (AVTTFAAVAGVVYVMY) lie within the membrane without spanning it. The Cytoplasmic segment spans residues 1535 to 2207 (KLFAGHQGAY…TLYRRWLDSF (673 aa)). An O-(5'-phospho-RNA)-tyrosine modification is found at Tyr-1544. The Peptidase C3 domain maps to 1564–1742 (GPGFDYAVAM…FAAALKRSYF (179 aa)). Residues His-1603, Glu-1634, and Cys-1710 each act as for protease 3C activity in the active site. One can recognise a RdRp catalytic domain in the interval 1973–2088 (EKLFAFDYTG…SYPHEVDASL (116 aa)). Mg(2+) contacts are provided by Asp-1979 and Asp-2074.

It belongs to the picornaviruses polyprotein family. Interacts with capsid protein VP1 and capsid protein VP3 to form heterotrimeric protomers. In terms of assembly, interacts with capsid protein VP0, and capsid protein VP3 to form heterotrimeric protomers. Interacts with human PVR. Five protomers subsequently associate to form pentamers which serve as building blocks for the capsid. Interacts with capsid protein VP2, capsid protein VP3 and capsid protein VP4 following cleavage of capsid protein VP0. As to quaternary structure, interacts with capsid protein VP1 and capsid protein VP3 in the mature capsid. Interacts with capsid protein VP0 and capsid protein VP1 to form heterotrimeric protomers. Five protomers subsequently associate to form pentamers which serve as building blocks for the capsid. Interacts with capsid protein VP4 in the mature capsid. Interacts with protein 2C; this interaction may be important for virion morphogenesis. In terms of assembly, interacts with capsid protein VP1 and capsid protein VP3. As to quaternary structure, homodimer. Homohexamer; forms a hexameric ring structure with 6-fold symmetry characteristic of AAA+ ATPases. Interacts (via N-terminus) with host RTN3 (via reticulon domain); this interaction is important for viral replication. Interacts with capsid protein VP3; this interaction may be important for virion morphogenesis. In terms of assembly, interacts with protein 3CD. As to quaternary structure, homodimer. Interacts with host GBF1. Interacts (via GOLD domain) with host ACBD3 (via GOLD domain); this interaction allows the formation of a viral protein 3A/ACBD3 heterotetramer with a 2:2 stoichiometry, which will stimulate the recruitment of host PI4KB in order to synthesize PI4P at the viral RNA replication sites. Interacts with RNA-directed RNA polymerase. In terms of assembly, interacts with protein 3AB and with RNA-directed RNA polymerase. As to quaternary structure, interacts with Viral protein genome-linked and with protein 3CD. The cofactor is Mg(2+). Specific enzymatic cleavages in vivo by the viral proteases yield processing intermediates and the mature proteins. In terms of processing, myristoylation is required for the formation of pentamers during virus assembly. Further assembly of 12 pentamers and a molecule of genomic RNA generates the provirion. Post-translationally, during virion maturation, immature virions are rendered infectious following cleavage of VP0 into VP4 and VP2. This maturation seems to be an autocatalytic event triggered by the presence of RNA in the capsid and it is followed by a conformational change infectious virion. Myristoylation is required during RNA encapsidation and formation of the mature virus particle. In terms of processing, VPg is uridylylated by the polymerase into VPg-pUpU. This acts as a nucleotide-peptide primer for the genomic RNA replication.

The protein localises to the virion. Its subcellular location is the host cytoplasm. It localises to the host cytoplasmic vesicle membrane. The protein resides in the host nucleus. It catalyses the reaction a ribonucleoside 5'-triphosphate + H2O = a ribonucleoside 5'-diphosphate + phosphate + H(+). It carries out the reaction Selective cleavage of Tyr-|-Gly bond in the picornavirus polyprotein.. The catalysed reaction is RNA(n) + a ribonucleoside 5'-triphosphate = RNA(n+1) + diphosphate. The enzyme catalyses Selective cleavage of Gln-|-Gly bond in the poliovirus polyprotein. In other picornavirus reactions Glu may be substituted for Gln, and Ser or Thr for Gly.. With respect to regulation, replication or transcription is subject to high level of random mutations by the nucleotide analog ribavirin. Its function is as follows. Forms an icosahedral capsid of pseudo T=3 symmetry with capsid proteins VP2 and VP3. The capsid is 300 Angstroms in diameter, composed of 60 copies of each capsid protein and enclosing the viral positive strand RNA genome. Capsid protein VP1 mainly forms the vertices of the capsid. Capsid protein VP1 interacts with host cell receptor PVR to provide virion attachment to target host cells. This attachment induces virion internalization predominantly through clathrin- and caveolin-independent endocytosis in Hela cells and through caveolin-mediated endocytosis in brain microvascular endothelial cells. Tyrosine kinases are probably involved in the entry process. Virus binding to PVR induces increased junctional permeability and rearrangement of junctional proteins. Modulation of endothelial tight junctions, as well as cytolytic infection of endothelial cells themselves, may result in loss of endothelial integrity which may help the virus to reach the CNS. After binding to its receptor, the capsid undergoes conformational changes. Capsid protein VP1 N-terminus (that contains an amphipathic alpha-helix) and capsid protein VP4 are externalized. Together, they shape a pore in the host membrane through which viral genome is translocated to host cell cytoplasm. Functionally, forms an icosahedral capsid of pseudo T=3 symmetry with capsid proteins VP2 and VP3. The capsid is 300 Angstroms in diameter, composed of 60 copies of each capsid protein and enclosing the viral positive strand RNA genome. In terms of biological role, lies on the inner surface of the capsid shell. After binding to the host receptor, the capsid undergoes conformational changes. Capsid protein VP4 is released, Capsid protein VP1 N-terminus is externalized, and together, they shape a pore in the host membrane through which the viral genome is translocated into the host cell cytoplasm. Component of immature procapsids, which is cleaved into capsid proteins VP4 and VP2 after maturation. Allows the capsid to remain inactive before the maturation step. Its function is as follows. Cysteine protease that cleaves viral polyprotein and specific host proteins. It is responsible for the autocatalytic cleavage between the P1 and P2 regions, which is the first cleavage occurring in the polyprotein. Also cleaves the host translation initiation factor EIF4G1, in order to shut down the capped cellular mRNA translation. Inhibits the host nucleus-cytoplasm protein and RNA trafficking by cleaving host members of the nuclear pores including NUP98, NUP62 and NUP153. Counteracts stress granule formation probably by antagonizing its assembly or promoting its dissassembly. Cleaves and inhibits host IFIH1/MDA5, thereby inhibiting the type-I IFN production and the establishment of the antiviral state. Cleaves and inhibits host MAVS, thereby inhibiting the type-I IFN production and the establishment of the antiviral state. Functionally, plays an essential role in the virus replication cycle by acting as a viroporin. Creates a pore in the host endoplasmic reticulum and as a consequence releases Ca2+ in the cytoplasm of infected cell. In turn, high levels of cytoplasmic calcium may trigger membrane trafficking and transport of viral ER-associated proteins to viroplasms, sites of viral genome replication. In terms of biological role, induces and associates with structural rearrangements of intracellular membranes. Displays RNA-binding, nucleotide binding and NTPase activities. May play a role in virion morphogenesis and viral RNA encapsidation by interacting with the capsid protein VP3. Localizes the viral replication complex to the surface of membranous vesicles. Together with protein 3CD binds the Cis-Active RNA Element (CRE) which is involved in RNA synthesis initiation. Acts as a cofactor to stimulate the activity of 3D polymerase, maybe through a nucleid acid chaperone activity. Its function is as follows. Localizes the viral replication complex to the surface of membranous vesicles. It inhibits host cell endoplasmic reticulum-to-Golgi apparatus transport and causes the disassembly of the Golgi complex, possibly through GBF1 interaction. This would result in depletion of MHC, trail receptors and IFN receptors at the host cell surface. Plays an essential role in viral RNA replication by recruiting ACBD3 and PI4KB at the viral replication sites, thereby allowing the formation of the rearranged membranous structures where viral replication takes place. Functionally, acts as a primer for viral RNA replication and remains covalently bound to viral genomic RNA. VPg is uridylylated prior to priming replication into VPg-pUpU. The oriI viral genomic sequence may act as a template for this. The VPg-pUpU is then used as primer on the genomic RNA poly(A) by the RNA-dependent RNA polymerase to replicate the viral genome. During genome replication, the VPg-RNA linkage is removed by the host TDP2, thereby accelerating replication. During the late stage of the replication cycle, host TDP2 is excluded from sites of viral RNA synthesis and encapsidation, allowing for the generation of progeny virions. In terms of biological role, involved in the viral replication complex and viral polypeptide maturation. It exhibits protease activity with a specificity and catalytic efficiency that is different from protease 3C. Protein 3CD lacks polymerase activity. Protein 3CD binds to the 5'UTR of the viral genome. Major viral protease that mediates proteolytic processing of the polyprotein. Cleaves host EIF5B, contributing to host translation shutoff. Also cleaves host PABPC1, contributing to host translation shutoff. Cleaves host RIGI and thus contributes to the inhibition of type I interferon production. Cleaves host NLRP1, triggers host N-glycine-mediated degradation of the autoinhibitory NLRP1 N-terminal fragment. Inhibits the integrated stress response (ISR) in the infected cell by cleaving host G3BP1. Stress granule formation is thus inhibited, which allows protein synthesis and viral replication. Its function is as follows. Replicates the viral genomic RNA on the surface of intracellular membranes. May form linear arrays of subunits that propagate along a strong head-to-tail interaction called interface-I. Covalently attaches UMP to a tyrosine of VPg, which is used to prime RNA synthesis. The positive stranded RNA genome is first replicated at virus induced membranous vesicles, creating a dsRNA genomic replication form. This dsRNA is then used as template to synthesize positive stranded RNA genomes. ss(+)RNA genomes are either translated, replicated or encapsidated. This chain is Genome polyprotein, found in Homo sapiens (Human).